A 377-amino-acid polypeptide reads, in one-letter code: Alanine racemase (377 aa).

The Proton acceptor; specific for D-alanine role is filled by lysine 37. An N6-(pyridoxal phosphate)lysine modification is found at lysine 37. Residue arginine 135 participates in substrate binding. The Proton acceptor; specific for L-alanine role is filled by tyrosine 271. Residue methionine 319 coordinates substrate.

The protein belongs to the alanine racemase family. Pyridoxal 5'-phosphate serves as cofactor.

It carries out the reaction L-alanine = D-alanine. The protein operates within amino-acid biosynthesis; D-alanine biosynthesis; D-alanine from L-alanine: step 1/1. Catalyzes the interconversion of L-alanine and D-alanine. May also act on other amino acids. The polypeptide is Alanine racemase (alr) (Helicobacter pylori (strain HPAG1)).